Here is a 304-residue protein sequence, read N- to C-terminus: Thyroxine 5-deiodinase (304 aa).

Residues 1-22 are disordered; the sequence is MPRQAASRLVVGEGEGPPGASG. At 1–42 the chain is on the cytoplasmic side; it reads MPRQAASRLVVGEGEGPPGASGPAATMLRSLLLHSLRLCAQT. Residues 43–62 form a helical; Signal-anchor for type II membrane protein membrane-spanning segment; the sequence is ASCLVLFPRFLGTAFMLWLL. At 63–304 the chain is on the extracellular side; that stretch reads DFLCIRKHFL…QLHGTRPRRL (242 aa). Selenocysteine 170 is an active-site residue. A non-standard amino acid (selenocysteine) is located at residue selenocysteine 170.

This sequence belongs to the iodothyronine deiodinase family. Monomer. Homodimer. May undergo minor heretodimerization with DIO1 and DIO2. As to expression, neonatal skin, placenta, skeletal muscle and cerebral cortex.

Its subcellular location is the cell membrane. It localises to the endosome membrane. It catalyses the reaction 3,3',5'-triiodo-L-thyronine + iodide + A + H(+) = L-thyroxine + AH2. The catalysed reaction is 3,3'-diiodo-L-thyronine + iodide + A + H(+) = 3,3',5-triiodo-L-thyronine + AH2. The enzyme catalyses 3-iodo-L-thyronine + iodide + A + H(+) = 3,5-diiodo-L-thyronine + AH2. It carries out the reaction L-thyronine + iodide + A + H(+) = 3-iodo-L-thyronine + AH2. It catalyses the reaction 3',5'-diiodo-L-thyronine + iodide + A + H(+) = 3,3',5'-triiodo-L-thyronine + AH2. The catalysed reaction is 3'-iodo-L-thyronine + iodide + A + H(+) = 3,3'-diiodo-L-thyronine + AH2. The enzyme catalyses 3,3',5'-triiodothyronamine + iodide + A + H(+) = 3,3',5,5'-tetraiodothyronamine + AH2. It carries out the reaction 3',5'-diiodothyronamine + iodide + A + H(+) = 3,3',5'-triiodothyronamine + AH2. It catalyses the reaction 3,3'-diiodothyronamine + iodide + A + H(+) = 3,3',5-triiodothyronamine + AH2. The catalysed reaction is 3-iodothyronamine + iodide + A + H(+) = 3,5-diiodothyronamine + AH2. The enzyme catalyses 3'-iodothyronamine + iodide + A + H(+) = 3,3'-diiodothyronamine + AH2. It carries out the reaction thyronamine + iodide + A + H(+) = 3-iodothyronamine + AH2. Its function is as follows. Plays a crucial role in the metabolism of thyroid hormones (TH) and has specific roles in TH activation and inactivation by deiodination. Catalyzes the deiodination of L-thyroxine (T4) to 3,3',5'-triiodothyronine (rT3), 3,5-diiodothyronine (3,5-T2) to 3-monoiodothyronine (3-T1), rT3 to 3',5'-diiodothyronine (3',5'-T2) and 3,3'-diiodothyronine (3,3'-T2) to 3'-monoiodothyronine (3'-T1) via inner-ring deiodination (IRD). Catalyzes the deiodination of 3,5,3'-triiodothyronine (T3) to 3,3'-diiodothyronine (3,3'-T2) via IRD. Catalyzes the deiodination of 3-T1 to L-thyronine (T0) via outer-ring deiodination (ORD). Catalyzes the tyrosyl ring deiodinations of T4AM (3,3',5,5'-tetraiodothyronamine), rT3AM (3,3',5'-triiodothyronamine), T3AM (3,5,3'-triiodothyronamine), 3,5-T2AM (3,5-diiodothyronamine), 3,3'-T2AM (3,3'-diiodothyronamine) and 3-T1AM (3-iodothyronamine). The protein is Thyroxine 5-deiodinase (Dio3) of Rattus norvegicus (Rat).